Reading from the N-terminus, the 283-residue chain is Diaminopimelate epimerase (283 aa).

Residues Asn14, Gln47, and Asn67 each contribute to the substrate site. Catalysis depends on Cys76, which acts as the Proton donor. Substrate contacts are provided by residues 77–78 (GN), Asn164, Asn197, and 215–216 (ER). Catalysis depends on Cys224, which acts as the Proton acceptor. 225-226 (GT) contributes to the substrate binding site.

The protein belongs to the diaminopimelate epimerase family. In terms of assembly, homodimer.

The protein resides in the cytoplasm. The enzyme catalyses (2S,6S)-2,6-diaminopimelate = meso-2,6-diaminopimelate. Its pathway is amino-acid biosynthesis; L-lysine biosynthesis via DAP pathway; DL-2,6-diaminopimelate from LL-2,6-diaminopimelate: step 1/1. Catalyzes the stereoinversion of LL-2,6-diaminopimelate (L,L-DAP) to meso-diaminopimelate (meso-DAP), a precursor of L-lysine and an essential component of the bacterial peptidoglycan. This chain is Diaminopimelate epimerase, found in Neisseria meningitidis serogroup A / serotype 4A (strain DSM 15465 / Z2491).